The following is a 250-amino-acid chain: Probable transcriptional regulatory protein Ctha_1786 (250 aa).

It belongs to the TACO1 family.

The protein resides in the cytoplasm. This is Probable transcriptional regulatory protein Ctha_1786 from Chloroherpeton thalassium (strain ATCC 35110 / GB-78).